Consider the following 926-residue polypeptide: DNA mismatch repair protein MutS (926 aa).

Residues 16-40 (VASTPTRRGRPPGSSAARASNGAGS) form a disordered region. The segment covering 26–40 (PPGSSAARASNGAGS) has biased composition (low complexity). 658-665 (GPNMAGKS) lines the ATP pocket.

The protein belongs to the DNA mismatch repair MutS family.

Functionally, this protein is involved in the repair of mismatches in DNA. It is possible that it carries out the mismatch recognition step. This protein has a weak ATPase activity. The protein is DNA mismatch repair protein MutS of Granulibacter bethesdensis (strain ATCC BAA-1260 / CGDNIH1).